The primary structure comprises 387 residues: 3-ketoacyl-CoA thiolase (387 aa).

The active-site Acyl-thioester intermediate is C91. Active-site proton acceptor residues include H343 and C373.

It belongs to the thiolase-like superfamily. Thiolase family. As to quaternary structure, heterotetramer of two alpha chains (FadB) and two beta chains (FadA).

It is found in the cytoplasm. The enzyme catalyses an acyl-CoA + acetyl-CoA = a 3-oxoacyl-CoA + CoA. Its pathway is lipid metabolism; fatty acid beta-oxidation. Its function is as follows. Catalyzes the final step of fatty acid oxidation in which acetyl-CoA is released and the CoA ester of a fatty acid two carbons shorter is formed. The sequence is that of 3-ketoacyl-CoA thiolase from Klebsiella pneumoniae subsp. pneumoniae (strain ATCC 700721 / MGH 78578).